Reading from the N-terminus, the 253-residue chain is 5-oxoprolinase subunit A (253 aa).

Belongs to the LamB/PxpA family. In terms of assembly, forms a complex composed of PxpA, PxpB and PxpC.

The enzyme catalyses 5-oxo-L-proline + ATP + 2 H2O = L-glutamate + ADP + phosphate + H(+). Catalyzes the cleavage of 5-oxoproline to form L-glutamate coupled to the hydrolysis of ATP to ADP and inorganic phosphate. This Syntrophobacter fumaroxidans (strain DSM 10017 / MPOB) protein is 5-oxoprolinase subunit A.